A 472-amino-acid polypeptide reads, in one-letter code: Membrane-bound lytic murein transglycosylase F (472 aa).

The N-terminal stretch at 1–24 (MRLLVIFLLALLLMACKEAPKPLA) is a signal peptide. Positions 25 to 259 (DPRTTKEIIV…HLIDRYYGHA (235 aa)) are non-LT domain. Residues 260-472 (DRLKPVDVTT…NGFGNTLSQE (213 aa)) are LT domain. Glu-306 is an active-site residue.

It in the N-terminal section; belongs to the bacterial solute-binding protein 3 family. This sequence in the C-terminal section; belongs to the transglycosylase Slt family.

It is found in the cell outer membrane. It carries out the reaction Exolytic cleavage of the (1-&gt;4)-beta-glycosidic linkage between N-acetylmuramic acid (MurNAc) and N-acetylglucosamine (GlcNAc) residues in peptidoglycan, from either the reducing or the non-reducing ends of the peptidoglycan chains, with concomitant formation of a 1,6-anhydrobond in the MurNAc residue.. Functionally, murein-degrading enzyme that degrades murein glycan strands and insoluble, high-molecular weight murein sacculi, with the concomitant formation of a 1,6-anhydromuramoyl product. Lytic transglycosylases (LTs) play an integral role in the metabolism of the peptidoglycan (PG) sacculus. Their lytic action creates space within the PG sacculus to allow for its expansion as well as for the insertion of various structures such as secretion systems and flagella. This chain is Membrane-bound lytic murein transglycosylase F, found in Methylobacillus flagellatus (strain ATCC 51484 / DSM 6875 / VKM B-1610 / KT).